The primary structure comprises 546 residues: Phosphatidylinositol 4-phosphate 5-kinase type-1 alpha (546 aa).

In terms of domain architecture, PIPK spans 65-433; it reads TSSALKGAIQ…RFQRFMCNTV (369 aa). Residue K87 forms a Glycyl lysine isopeptide (Lys-Gly) (interchain with G-Cter in ubiquitin) linkage. Residues 441 to 522 form a disordered region; that stretch reads PSPTKKFRSG…PGPSFSPAVG (82 aa). Over residues 449–461 the composition is skewed to low complexity; sequence SGPSFSRRSGPSG. Over residues 462-471 the composition is skewed to polar residues; the sequence is NSCTPSQPTA. Basic and acidic residues predominate over residues 473 to 493; it reads GEHKAQVTTKAEVEPDIHLGR.

Interacts with RAC1. Interacts with TUT1. Forms a complex with CDH1/E-cadherin, CTNNB1/beta-catenin and CTNND1 at the plasma membrane upon calcium stimulation. Found in a ternary complex with IRS1 and DGKZ in the absence of insulin stimulation. Interacts with DGKZ. Interacts with PIP4K2C; the interaction inhibits PIP5K1A kinase activity.

The protein resides in the cell membrane. It localises to the cytoplasm. The protein localises to the nucleus. Its subcellular location is the nucleus speckle. It is found in the cell projection. The protein resides in the ruffle. It localises to the lamellipodium. It carries out the reaction a 1,2-diacyl-sn-glycero-3-phospho-(1D-myo-inositol 4-phosphate) + ATP = a 1,2-diacyl-sn-glycero-3-phospho-(1D-myo-inositol-4,5-bisphosphate) + ADP + H(+). The enzyme catalyses 1-octadecanoyl-2-(5Z,8Z,11Z,14Z)-eicosatetraenoyl-sn-glycero-3-phospho-1D-myo-inositol 4-phosphate + ATP = 1-octadecanoyl-2-(5Z,8Z,11Z,14Z)-eicosatetraenoyl-sn-glycero-3-phospho-1D-myo-inositol 4,5-bisphosphate + ADP + H(+). It catalyses the reaction 1,2-dihexadecanoyl-sn-glycero-3-phospho-(1D-myo-inositol-4-phosphate) + ATP = 1,2-dihexadecanoyl-sn-glycero-3-phospho-(1D-myo-inositol-4,5-bisphosphate) + ADP + H(+). The catalysed reaction is 1-octadecanoyl-2-(9Z)-octadecenoyl-sn-glycero-3-phospho-1D-myo-inositol 4-phosphate + ATP = 1-octadecanoyl-2-(9Z)-octadecenoyl-sn-glycero-3-phospho-1D-myo-inositol 4,5-bisphosphate + ADP + H(+). It carries out the reaction 1-octadecanoyl-2-(9Z)-octadecenoyl-sn-glycero-3-phospho-1D-myo-inositol + ATP = 1-octadecanoyl-2-(9Z)-octadecenoyl-sn-glycero-3-phospho-1D-myo-inositol 5-phosphate + ADP + H(+). The enzyme catalyses 1-octadecanoyl-2-(9Z,12Z)-octadecadienoyl-sn-glycero-3-phospho-1D-myo-inositol + ATP = 1-octadecanoyl-2-(9Z,12Z)-octadecadienoyl-sn-glycero-3-phospho-1D-myo-inositol 5-phosphate + ADP + H(+). It catalyses the reaction 1-octadecanoyl-2-(5Z,8Z,11Z,14Z-eicosatetraenoyl)-sn-glycero-3-phospho-(1D-myo-inositol) + ATP = 1-octadecanoyl-2-(5Z,8Z,11Z,14Z)-eicosatetraenoyl-sn-glycero-3-phospho-1D-myo-inositol 5-phosphate + ADP + H(+). The catalysed reaction is 1,2-di-(9Z,12Z)-octadecadienoyl-sn-glycero-3-phospho-1D-myo-inositol + ATP = 1,2-di(9Z,12Z)-octadecadienoyl-sn-glycero-3-phospho-1D-myo-inositol 5-phosphate + ADP + H(+). In terms of biological role, catalyzes the phosphorylation of phosphatidylinositol 4-phosphate (PtdIns(4)P/PI4P) to form phosphatidylinositol 4,5-bisphosphate (PtdIns(4,5)P2/PIP2), a lipid second messenger that regulates several cellular processes such as signal transduction, vesicle trafficking, actin cytoskeleton dynamics, cell adhesion, and cell motility. PtdIns(4,5)P2 can directly act as a second messenger or can be utilized as a precursor to generate other second messengers: inositol 1,4,5-trisphosphate (IP3), diacylglycerol (DAG) or phosphatidylinositol-3,4,5-trisphosphate (PtdIns(3,4,5)P3/PIP3). PIP5K1A-mediated phosphorylation of PtdIns(4)P is the predominant pathway for PtdIns(4,5)P2 synthesis. Can also use phosphatidylinositol (PtdIns) as substrate in vitro. Together with PIP5K1C, is required for phagocytosis, both enzymes regulating different types of actin remodeling at sequential steps. Promotes particle ingestion by activating the WAS GTPase-binding protein that induces Arp2/3 dependent actin polymerization at the nascent phagocytic cup. Together with PIP5K1B, is required, after stimulation by G-protein coupled receptors, for the synthesis of IP3 that will induce stable platelet adhesion. Recruited to the plasma membrane by the E-cadherin/beta-catenin complex where it provides the substrate PtdIns(4,5)P2 for the production of PtdIns(3,4,5)P3, IP3 and DAG, that will mobilize internal calcium and drive keratinocyte differentiation. Positively regulates insulin-induced translocation of SLC2A4 to the cell membrane in adipocytes. Together with PIP5K1C has a role during embryogenesis. Independently of its catalytic activity, is required for membrane ruffling formation, actin organization and focal adhesion formation during directional cell migration by controlling integrin-induced translocation of the small GTPase RAC1 to the plasma membrane. Also functions in the nucleus where it acts as an activator of TUT1 adenylyltransferase activity in nuclear speckles, thereby regulating mRNA polyadenylation of a select set of mRNAs. The chain is Phosphatidylinositol 4-phosphate 5-kinase type-1 alpha from Rattus norvegicus (Rat).